Consider the following 726-residue polypeptide: Probable dipeptidyl-peptidase 5 (726 aa).

An N-terminal signal peptide occupies residues 1-19; the sequence is MAAAKWLIASLAFASSGLA. 2 N-linked (GlcNAc...) asparagine glycosylation sites follow: asparagine 96 and asparagine 252. The disordered stretch occupies residues 269–291; that stretch reads AEPINKRNGPRTPQGIEGASSSP. Asparagine 485 carries N-linked (GlcNAc...) asparagine glycosylation. Catalysis depends on serine 558, which acts as the Charge relay system. Asparagine 605 carries N-linked (GlcNAc...) asparagine glycosylation. Residues aspartate 641 and histidine 673 each act as charge relay system in the active site. Asparagine 699 carries an N-linked (GlcNAc...) asparagine glycan.

It belongs to the peptidase S9C family.

The protein resides in the secreted. Its function is as follows. Extracellular dipeptidyl-peptidase which removes N-terminal dipeptides sequentially from polypeptides having unsubstituted N-termini. Contributes to pathogenicity. This chain is Probable dipeptidyl-peptidase 5 (DPP5), found in Arthroderma benhamiae (strain ATCC MYA-4681 / CBS 112371) (Trichophyton mentagrophytes).